We begin with the raw amino-acid sequence, 403 residues long: Leu/Ile/Val-binding protein homolog 8 (403 aa).

Residues 1-26 (MRLSRLLIGASLGVALSSTVFTAALA) form the signal peptide.

The protein belongs to the leucine-binding protein family.

Component of an amino-acid transport system. This Brucella melitensis biotype 1 (strain ATCC 23456 / CCUG 17765 / NCTC 10094 / 16M) protein is Leu/Ile/Val-binding protein homolog 8.